Consider the following 624-residue polypeptide: (-)-beta-phellandrene synthase 1, chloroplastic (624 aa).

The N-terminal 48 residues, 1–48 (MAIVSSVPLASKSCLHKSLISSIHKLKPFCRTIPTLGMSRPGKYVMPS), are a transit peptide targeting the chloroplast. Aspartate 375, aspartate 379, and aspartate 527 together coordinate Mg(2+). The short motif at 375-379 (DDMYD) is the DDXXD motif element.

Belongs to the terpene synthase family. Tpsd subfamily. It depends on Mg(2+) as a cofactor. Requires Mn(2+) as cofactor.

It is found in the plastid. The protein localises to the chloroplast. It carries out the reaction (2E)-geranyl diphosphate = (-)-beta-phellandrene + diphosphate. It functions in the pathway terpene metabolism; oleoresin biosynthesis. Its function is as follows. Terpene synthase (TPS) involved in the biosynthesis of monoterpene natural products included in conifer oleoresin secretions and volatile emissions; these compounds contribute to biotic and abiotic stress defense against herbivores and pathogens. Catalyzes the conversion of (2E)-geranyl diphosphate (GPP) to (-)-beta-phellandrene. The chain is (-)-beta-phellandrene synthase 1, chloroplastic from Picea sitchensis (Sitka spruce).